The sequence spans 834 residues: MAP kinase phosphatase with leucine-rich repeats protein 1 (834 aa).

The disordered stretch occupies residues 1-103; the sequence is MIFKKLFSKG…GSGTTKESKK (103 aa). Over residues 36–78 the composition is skewed to low complexity; that stretch reads GSGTNTNGLSNSTTNPSSIHSTPTTPTTTASTNLTNSNKLSTL. A compositionally biased stretch (polar residues) spans 79–98; sequence APITNGNRSLRGSKDGSGTT. LRR repeat units follow at residues 160-181, 183-204, 206-226, 229-251, 252-273, 274-292, 298-319, 321-342, 345-366, and 368-389; these read ELRSLILDFNKITEIPEQIGLL, NLKHLSLAANQLSQVPEFLSQL, SLESLELGINQFTSFPLNICK, SLTLLRLETNNIKSLPDDFINLE, NLKDLSLLDNQLKEIPDSLPNN, IEKLNLGCNDIINSYSKSL, SLTTLNLSENKIEVLDESLSCL, NVKTLILDCNMIKVIPGSVLGS, SLVTLNLPHNFISDLPAEIVTL, and NLRIIDLRGNNFEFCKNYPSSE. The disordered stretch occupies residues 503-584; that stretch reads YEKQENDENN…ENPLKESQGK (82 aa). Residues 511 to 536 show a composition bias toward polar residues; that stretch reads NNSVTLETTTTISIASDNTDEASIQI. Basic and acidic residues-rich tracts occupy residues 538–554 and 569–582; these read QKEDGDKENLENDDKLL and KQQEQQENPLKESQ. The stretch at 555–615 forms a coiled coil; sequence QESFSENNNN…IRLEKIKYQE (61 aa). The region spanning 695–834 is the Tyrosine-protein phosphatase domain; it reads VPDLIIDKLY…LKKFEKDLSK (140 aa). Cys778 (phosphocysteine intermediate) is an active-site residue.

It belongs to the protein-tyrosine phosphatase family. Non-receptor class dual specificity subfamily.

It catalyses the reaction O-phospho-L-tyrosyl-[protein] + H2O = L-tyrosyl-[protein] + phosphate. It carries out the reaction O-phospho-L-seryl-[protein] + H2O = L-seryl-[protein] + phosphate. The enzyme catalyses O-phospho-L-threonyl-[protein] + H2O = L-threonyl-[protein] + phosphate. In terms of biological role, probable phosphatase with dual specificity toward Ser/Thr and Tyr-containing proteins. Dephosphorylates pNPP, in vitro. Essential for proper regulation of erkB (erk2) and optimal motility during development. The sequence is that of MAP kinase phosphatase with leucine-rich repeats protein 1 (mpl1) from Dictyostelium discoideum (Social amoeba).